The sequence spans 309 residues: 2-oxoacid:ferredoxin oxidoreductase 2, subunit beta (309 aa).

Residues C17, C20, and C51 each contribute to the [4Fe-4S] cluster site. Residues 49–52 (IGCS) and H68 each bind thiamine diphosphate. D93 is a Mg(2+) binding site. 94-95 (GD) contacts thiamine diphosphate. Mg(2+) is bound by residues N121 and V123. 125–126 (GL) serves as a coordination point for thiamine diphosphate. [4Fe-4S] cluster is bound at residue C200.

As to quaternary structure, heterodimer composed of an alpha and a beta subunit. The cofactor is [4Fe-4S] cluster. It depends on thiamine diphosphate as a cofactor. Mg(2+) is required as a cofactor.

It catalyses the reaction a 2-oxocarboxylate + 2 oxidized [2Fe-2S]-[ferredoxin] + CoA = an acyl-CoA + 2 reduced [2Fe-2S]-[ferredoxin] + CO2 + H(+). Its function is as follows. Catalyzes the coenzyme A-dependent oxidative decarboxylation of different 2-oxoacids such as pyruvate, 2-oxobutyrate, glyoxylate and 2-oxoglutarate to form their CoA derivatives. In Aeropyrum pernix (strain ATCC 700893 / DSM 11879 / JCM 9820 / NBRC 100138 / K1), this protein is 2-oxoacid:ferredoxin oxidoreductase 2, subunit beta.